Reading from the N-terminus, the 119-residue chain is Small ribosomal subunit protein uS13m (119 aa).

The protein belongs to the universal ribosomal protein uS13 family. In terms of assembly, part of the small ribosomal subunit.

The protein resides in the mitochondrion. Its function is as follows. Located at the top of the head of the small subunit, it contacts several helices of the small subunit rRNA. In Acanthamoeba castellanii (Amoeba), this protein is Small ribosomal subunit protein uS13m (RPS13).